The primary structure comprises 126 residues: UPF0212 protein TON_0350 (126 aa).

It belongs to the UPF0212 family.

The chain is UPF0212 protein TON_0350 from Thermococcus onnurineus (strain NA1).